Reading from the N-terminus, the 425-residue chain is E3 ubiquitin-protein ligase TRIM31 (425 aa).

The segment at 16 to 57 (CPICLDILQKPVTIDCGHNFCLKCITQIGETSCGFFKCPLCK) adopts an RING-type zinc-finger fold. The B box-type zinc-finger motif lies at 90 to 131 (RKEATCPRHQEMFHYFCEDDGKFLCFVCRESKDHKSHNVSLI). Residues Cys95, His98, Cys117, and His123 each coordinate Zn(2+). 2 coiled-coil regions span residues 126-162 (HNVS…VKAQ) and 270-307 (LELE…DENR). Residues 328-360 (HKMNKTSEPGSSSAGGRTTSGPPNHHSSAPSHS) form a disordered region. The segment covering 336–360 (PGSSSAGGRTTSGPPNHHSSAPSHS) has biased composition (low complexity).

This sequence belongs to the TRIM/RBCC family. As to quaternary structure, may form oligomers. Interacts with isoform p52shc of SHC1. Auto-ubiquitinated (in vitro). In terms of tissue distribution, up-regulated in gastric adenocarcinomas.

Its subcellular location is the cytoplasm. The protein localises to the mitochondrion. It carries out the reaction S-ubiquitinyl-[E2 ubiquitin-conjugating enzyme]-L-cysteine + [acceptor protein]-L-lysine = [E2 ubiquitin-conjugating enzyme]-L-cysteine + N(6)-ubiquitinyl-[acceptor protein]-L-lysine.. It functions in the pathway protein modification; protein ubiquitination. Functionally, E3 ubiquitin-protein ligase that acts as a regulator of antiviral immune response and inflammation by mediating ubiquitination of substrates. Acts as a regulator of innate immune defense against viruses by mediating 'Lys-63'-linked ubiquitination of MAVS, promoting MAVS polymerization and formation of three-stranded helical filaments on mitochondria. Acts as a negative regulator of the NLRP3 inflammasome by catalyzing 'Lys-48'-linked ubiquitination of NLRP3, leading to its degradation. Regulator of Src-induced anchorage independent cell growth. The chain is E3 ubiquitin-protein ligase TRIM31 from Homo sapiens (Human).